Here is a 20-residue protein sequence, read N- to C-terminus: Cytosol aminopeptidase (20 aa).

Serine 6 carries the phosphoserine modification.

It belongs to the peptidase M17 family. In terms of assembly, homohexamer. The cofactor is Zn(2+). Mn(2+) is required as a cofactor.

It is found in the cytoplasm. It catalyses the reaction Release of an N-terminal amino acid, Xaa-|-Yaa-, in which Xaa is preferably Leu, but may be other amino acids including Pro although not Arg or Lys, and Yaa may be Pro. Amino acid amides and methyl esters are also readily hydrolyzed, but rates on arylamides are exceedingly low.. It carries out the reaction an S-substituted L-cysteinylglycine + H2O = an S-substituted L-cysteine + glycine. The enzyme catalyses L-cysteinylglycine + H2O = L-cysteine + glycine. The catalysed reaction is S-benzyl-L-cysteinylglycine + H2O = S-benzyl-L-cysteine + glycine. It catalyses the reaction Release of N-terminal proline from a peptide.. In terms of biological role, cytosolic metallopeptidase that catalyzes the removal of unsubstituted N-terminal hydrophobic amino acids from various peptides. The presence of Zn(2+) ions is essential for the peptidase activity, and the association with other cofactors can modulate the substrate spectificity of the enzyme. For instance, in the presence of Mn(2+), it displays a specific Cys-Gly hydrolyzing activity of Cys-Gly-S-conjugates. Involved in the metabolism of glutathione and in the degradation of glutathione S-conjugates, which may play a role in the control of the cell redox status. The protein is Cytosol aminopeptidase of Mesocricetus auratus (Golden hamster).